Consider the following 157-residue polypeptide: MGRLISVSFGLLVVFLSLSGTGADQDCLPGWSFYEGHCYKVFNVKKTWEDAEKFCQKQSNGKHLATIEWLGKANFVADLVTLMNSDPDLDWIGLRVEDKRQQCSSHWTDGSAVSYENVVHNTKCFGLDQKTGYRTWVALRCELAYHFICMSRVPRGA.

The N-terminal stretch at 1-23 (MGRLISVSFGLLVVFLSLSGTGA) is a signal peptide. 3 disulfide bridges follow: C27–C38, C55–C149, and C124–C141. The C-type lectin domain occupies 34-150 (YEGHCYKVFN…CELAYHFICM (117 aa)).

This sequence belongs to the snaclec family. Heterodimer; disulfide-linked. Expressed by the venom gland.

It localises to the secreted. In terms of biological role, interferes with one step of hemostasis (modulation of platelet aggregation, or coagulation cascade, for example). The polypeptide is Snaclec A16 (Macrovipera lebetinus (Levantine viper)).